A 205-amino-acid chain; its full sequence is Colicin-E8 (205 aa).

Disordered stretches follow at residues 24–109 (AQTD…PDRI) and 136–187 (PELS…VYDM). Basic and acidic residues-rich tracts occupy residues 53–76 (QERR…ESKR), 88–99 (PVGDKWLDDAGK), and 159–178 (RNKD…DKPI). 3 residues coordinate Zn(2+): His-173, His-198, and His-202.

It belongs to the colicin/pyosin nuclease family.

In terms of biological role, this plasmid-coded bactericidal protein is an endonuclease active on both single- and double-stranded DNA but with undefined specificity. Colicins are polypeptide toxins produced by and active against E.coli and closely related bacteria. The polypeptide is Colicin-E8 (col) (Escherichia coli).